Reading from the N-terminus, the 213-residue chain is ATP phosphoribosyltransferase (213 aa).

It belongs to the ATP phosphoribosyltransferase family. Short subfamily. In terms of assembly, heteromultimer composed of HisG and HisZ subunits.

It localises to the cytoplasm. The enzyme catalyses 1-(5-phospho-beta-D-ribosyl)-ATP + diphosphate = 5-phospho-alpha-D-ribose 1-diphosphate + ATP. It participates in amino-acid biosynthesis; L-histidine biosynthesis; L-histidine from 5-phospho-alpha-D-ribose 1-diphosphate: step 1/9. In terms of biological role, catalyzes the condensation of ATP and 5-phosphoribose 1-diphosphate to form N'-(5'-phosphoribosyl)-ATP (PR-ATP). Has a crucial role in the pathway because the rate of histidine biosynthesis seems to be controlled primarily by regulation of HisG enzymatic activity. This is ATP phosphoribosyltransferase from Chromobacterium violaceum (strain ATCC 12472 / DSM 30191 / JCM 1249 / CCUG 213 / NBRC 12614 / NCIMB 9131 / NCTC 9757 / MK).